A 739-amino-acid chain; its full sequence is Phosphoribosylformylglycinamidine synthase subunit PurL (739 aa).

The active site involves His54. Residues Tyr57 and Lys96 each contribute to the ATP site. Glu98 contributes to the Mg(2+) binding site. Substrate is bound by residues Ser99 to His102 and Arg121. The active-site Proton acceptor is the His100. Asp122 contributes to the Mg(2+) binding site. Gln245 lines the substrate pocket. Residue Asp273 participates in Mg(2+) binding. Substrate is bound at residue Glu317–Gln319. Asp500 and Gly537 together coordinate ATP. Asn538 lines the Mg(2+) pocket. Position 540 (Ser540) interacts with substrate.

Belongs to the FGAMS family. As to quaternary structure, monomer. Part of the FGAM synthase complex composed of 1 PurL, 1 PurQ and 2 PurS subunits.

The protein resides in the cytoplasm. The catalysed reaction is N(2)-formyl-N(1)-(5-phospho-beta-D-ribosyl)glycinamide + L-glutamine + ATP + H2O = 2-formamido-N(1)-(5-O-phospho-beta-D-ribosyl)acetamidine + L-glutamate + ADP + phosphate + H(+). It functions in the pathway purine metabolism; IMP biosynthesis via de novo pathway; 5-amino-1-(5-phospho-D-ribosyl)imidazole from N(2)-formyl-N(1)-(5-phospho-D-ribosyl)glycinamide: step 1/2. Part of the phosphoribosylformylglycinamidine synthase complex involved in the purines biosynthetic pathway. Catalyzes the ATP-dependent conversion of formylglycinamide ribonucleotide (FGAR) and glutamine to yield formylglycinamidine ribonucleotide (FGAM) and glutamate. The FGAM synthase complex is composed of three subunits. PurQ produces an ammonia molecule by converting glutamine to glutamate. PurL transfers the ammonia molecule to FGAR to form FGAM in an ATP-dependent manner. PurS interacts with PurQ and PurL and is thought to assist in the transfer of the ammonia molecule from PurQ to PurL. The protein is Phosphoribosylformylglycinamidine synthase subunit PurL of Bacillus cereus (strain AH187).